A 551-amino-acid chain; its full sequence is DNA mismatch repair protein MutL (551 aa).

Belongs to the DNA mismatch repair MutL/HexB family.

Its function is as follows. This protein is involved in the repair of mismatches in DNA. It is required for dam-dependent methyl-directed DNA mismatch repair. May act as a 'molecular matchmaker', a protein that promotes the formation of a stable complex between two or more DNA-binding proteins in an ATP-dependent manner without itself being part of a final effector complex. The protein is DNA mismatch repair protein MutL of Thermosipho melanesiensis (strain DSM 12029 / CIP 104789 / BI429).